Reading from the N-terminus, the 223-residue chain is Phosphoribosylformylglycinamidine synthase subunit PurQ (223 aa).

The region spanning 3-223 is the Glutamine amidotransferase type-1 domain; it reads FAVLVFPGSN…MVKSWREQNV (221 aa). Cys85 serves as the catalytic Nucleophile. Catalysis depends on residues His193 and Glu195.

As to quaternary structure, part of the FGAM synthase complex composed of 1 PurL, 1 PurQ and 2 PurS subunits.

It is found in the cytoplasm. The enzyme catalyses N(2)-formyl-N(1)-(5-phospho-beta-D-ribosyl)glycinamide + L-glutamine + ATP + H2O = 2-formamido-N(1)-(5-O-phospho-beta-D-ribosyl)acetamidine + L-glutamate + ADP + phosphate + H(+). It catalyses the reaction L-glutamine + H2O = L-glutamate + NH4(+). The protein operates within purine metabolism; IMP biosynthesis via de novo pathway; 5-amino-1-(5-phospho-D-ribosyl)imidazole from N(2)-formyl-N(1)-(5-phospho-D-ribosyl)glycinamide: step 1/2. Its function is as follows. Part of the phosphoribosylformylglycinamidine synthase complex involved in the purines biosynthetic pathway. Catalyzes the ATP-dependent conversion of formylglycinamide ribonucleotide (FGAR) and glutamine to yield formylglycinamidine ribonucleotide (FGAM) and glutamate. The FGAM synthase complex is composed of three subunits. PurQ produces an ammonia molecule by converting glutamine to glutamate. PurL transfers the ammonia molecule to FGAR to form FGAM in an ATP-dependent manner. PurS interacts with PurQ and PurL and is thought to assist in the transfer of the ammonia molecule from PurQ to PurL. The protein is Phosphoribosylformylglycinamidine synthase subunit PurQ of Staphylococcus epidermidis (strain ATCC 35984 / DSM 28319 / BCRC 17069 / CCUG 31568 / BM 3577 / RP62A).